Reading from the N-terminus, the 317-residue chain is NADH-quinone oxidoreductase subunit H 1 (317 aa).

8 helical membrane passes run 7-27, 74-94, 107-127, 147-167, 179-199, 230-250, 257-277, and 297-317; these read IWVN…MLSW, AVFV…FAVV, IGVL…VLGG, LSYE…AGSF, LWFC…GIAE, FFIG…TLFF, VLPP…CFVL, and VMLP…LSVA.

The protein belongs to the complex I subunit 1 family. In terms of assembly, NDH-1 is composed of 14 different subunits. Subunits NuoA, H, J, K, L, M, N constitute the membrane sector of the complex.

It is found in the cell inner membrane. The catalysed reaction is a quinone + NADH + 5 H(+)(in) = a quinol + NAD(+) + 4 H(+)(out). Functionally, NDH-1 shuttles electrons from NADH, via FMN and iron-sulfur (Fe-S) centers, to quinones in the respiratory chain. The immediate electron acceptor for the enzyme in this species is believed to be ubiquinone. Couples the redox reaction to proton translocation (for every two electrons transferred, four hydrogen ions are translocated across the cytoplasmic membrane), and thus conserves the redox energy in a proton gradient. This subunit may bind ubiquinone. This is NADH-quinone oxidoreductase subunit H 1 from Nitrosospira multiformis (strain ATCC 25196 / NCIMB 11849 / C 71).